The sequence spans 255 residues: Sushi domain-containing protein 3 (255 aa).

Residues 1-25 (MRWAAATLRGKARPRGRAGVTTPAP) are disordered. The Extracellular portion of the chain corresponds to 1–103 (MRWAAATLRG…VPPHETFGFK (103 aa)). Asparagine 27 carries N-linked (GlcNAc...) asparagine glycosylation. Residues 30 to 93 (GTCAKLRLPP…WSSGSPVCKL (64 aa)) enclose the Sushi domain. Intrachain disulfides connect cysteine 32-cysteine 75 and cysteine 61-cysteine 91. A helical membrane pass occupies residues 104-124 (VAVIASIVSCAIILLMSMAFL). Residues 125–255 (TCCLLKCVKK…PQQPAAYALG (131 aa)) lie on the Cytoplasmic side of the membrane. The interval 173 to 255 (SGPSQAHDNH…PQQPAAYALG (83 aa)) is disordered. Residues 179–191 (HDNHSFTTDHGES) are compositionally biased toward basic and acidic residues.

In terms of tissue distribution, highly expressed in estrogen receptor-positive breast tumors.

The protein resides in the cell membrane. In terms of biological role, may play a role in breast tumorigenesis by promoting estrogen-dependent cell proliferation, cell-cell interactions and migration. The sequence is that of Sushi domain-containing protein 3 (SUSD3) from Homo sapiens (Human).